The primary structure comprises 497 residues: Tryptophan decarboxylase 2 (497 aa).

The pyridoxal 5'-phosphate site is built by Ala-162, Ser-163, Thr-257, and Asn-311. Lys-314 carries the post-translational modification N6-(pyridoxal phosphate)lysine.

Belongs to the group II decarboxylase family. Requires pyridoxal 5'-phosphate as cofactor.

It carries out the reaction L-tryptophan + H(+) = tryptamine + CO2. Involved in serotonin biosynthesis. Catalyzes the decarboxylation of L-tryptophan to tryptamine, which is converted to serotonin by tryptamine 5-hydroxylase. May play a minor role in serotonin biosynthetis during senescence. Accumulation of serotonin attenuates leaf senescence. The chain is Tryptophan decarboxylase 2 from Oryza sativa subsp. japonica (Rice).